Consider the following 329-residue polypeptide: Glycerol-3-phosphate dehydrogenase [NAD(P)+] (329 aa).

3 residues coordinate NADPH: Trp15, His35, and Lys107. The sn-glycerol 3-phosphate site is built by Lys107, Gly135, and Ser137. Residue Ala139 participates in NADPH binding. Sn-glycerol 3-phosphate is bound by residues Lys190, Asp243, Ser253, Arg254, and Asn255. Catalysis depends on Lys190, which acts as the Proton acceptor. Arg254 contributes to the NADPH binding site. Leu276 and Glu278 together coordinate NADPH.

Belongs to the NAD-dependent glycerol-3-phosphate dehydrogenase family.

It is found in the cytoplasm. It carries out the reaction sn-glycerol 3-phosphate + NAD(+) = dihydroxyacetone phosphate + NADH + H(+). It catalyses the reaction sn-glycerol 3-phosphate + NADP(+) = dihydroxyacetone phosphate + NADPH + H(+). Its pathway is membrane lipid metabolism; glycerophospholipid metabolism. Its function is as follows. Catalyzes the reduction of the glycolytic intermediate dihydroxyacetone phosphate (DHAP) to sn-glycerol 3-phosphate (G3P), the key precursor for phospholipid synthesis. The polypeptide is Glycerol-3-phosphate dehydrogenase [NAD(P)+] (Rhodopseudomonas palustris (strain TIE-1)).